Reading from the N-terminus, the 122-residue chain is Small ribosomal subunit protein uS13 (122 aa).

The segment at 97-122 (PVRGQKTKSNARTRKGPRPSRIKKKK) is disordered. A compositionally biased stretch (basic residues) spans 101–122 (QKTKSNARTRKGPRPSRIKKKK).

The protein belongs to the universal ribosomal protein uS13 family. Part of the 30S ribosomal subunit. Forms a loose heterodimer with protein S19. Forms two bridges to the 50S subunit in the 70S ribosome.

Its function is as follows. Located at the top of the head of the 30S subunit, it contacts several helices of the 16S rRNA. In the 70S ribosome it contacts the 23S rRNA (bridge B1a) and protein L5 of the 50S subunit (bridge B1b), connecting the 2 subunits; these bridges are implicated in subunit movement. Contacts the tRNAs in the A and P-sites. The chain is Small ribosomal subunit protein uS13 from Thermosipho melanesiensis (strain DSM 12029 / CIP 104789 / BI429).